A 120-amino-acid polypeptide reads, in one-letter code: NAD(P)H-quinone oxidoreductase subunit 3, chloroplastic (120 aa).

Transmembrane regions (helical) follow at residues 9–29, 64–84, and 88–108; these read IFWAFLIISSIIPILAFLISG, MFALVFVVFDVETVFLYPWAM, and VLGVSVFIEALIFVLIPIVGL.

Belongs to the complex I subunit 3 family. NDH is composed of at least 16 different subunits, 5 of which are encoded in the nucleus.

The protein localises to the plastid. It localises to the chloroplast thylakoid membrane. The enzyme catalyses a plastoquinone + NADH + (n+1) H(+)(in) = a plastoquinol + NAD(+) + n H(+)(out). The catalysed reaction is a plastoquinone + NADPH + (n+1) H(+)(in) = a plastoquinol + NADP(+) + n H(+)(out). Its function is as follows. NDH shuttles electrons from NAD(P)H:plastoquinone, via FMN and iron-sulfur (Fe-S) centers, to quinones in the photosynthetic chain and possibly in a chloroplast respiratory chain. The immediate electron acceptor for the enzyme in this species is believed to be plastoquinone. Couples the redox reaction to proton translocation, and thus conserves the redox energy in a proton gradient. This Ceratophyllum demersum (Rigid hornwort) protein is NAD(P)H-quinone oxidoreductase subunit 3, chloroplastic.